The following is a 625-amino-acid chain: Protein SUPPRESSOR OF GENE SILENCING 3 (625 aa).

Disordered stretches follow at residues M1–P20, A30–H148, and V161–H195. A compositionally biased stretch (polar residues) spans K54–P70. Over residues G80–G94 the composition is skewed to low complexity. The segment covering V161–S188 has biased composition (acidic residues). 2 coiled-coil regions span residues K452–E533 and I564–M615.

Belongs to the SGS3 family. Interacts with begomoviruses protein V2. Interacts with SGIP1 in cytoplasmic granules.

It localises to the cytoplasm. It is found in the perinuclear region. The protein localises to the cytoplasmic granule. Required for post-transcriptional gene silencing and natural virus resistance. May bind nucleic acids and is essential for the biogenesis of trans-acting siRNAs but is not required for silencing induced by IR-PTGS. Involved in the juvenile-to-adult transition regulation. In case of begomoviruses infection, it is targeted by the viral protein V2 leading to suppression of post-transcriptional gene silencing. Involved in the mechanisms necessary for quick response to heat and subsequent heritable transgenerational memory of heat acclimation (global warming) such as early flowering and attenuated immunity; this process includes epigenetic regulation as well as post-transcriptional gene silencing (PTGS). In response to heat, HSFA2 is activated and promotes the expression of REF6 which in turn derepresses HSFA2, thus establishing an inheritable feedback loop able to trigger SGIP1 and subsequent SGIP1-mediated SGS3 degradation; this prevents the biosynthesis of trans-acting siRNA (tasiRNA) and leads to the release of HTT5, which drives early flowering but attenuates immunity. The chain is Protein SUPPRESSOR OF GENE SILENCING 3 from Arabidopsis thaliana (Mouse-ear cress).